The sequence spans 344 residues: AI-2 transport protein TqsA (344 aa).

At 1–4 (MAKP) the chain is on the cytoplasmic side. Residues 5-25 (IITLNGLKIVIMLGMLVIILC) traverse the membrane as a helical segment. Over 26 to 30 (GIRFA) the chain is Periplasmic. A helical transmembrane segment spans residues 31-51 (AEIIVPFILALFIAVILNPLV). The Cytoplasmic portion of the chain corresponds to 52 to 61 (QHMVRWRVPR). Residues 62-82 (VLAVSILMTIIVMAMVLLLAY) form a helical membrane-spanning segment. Residues 83 to 149 (LGSALNELTR…LLTQLSNAMS (67 aa)) are Periplasmic-facing. Residues 150 to 170 (SIFLLLLTVLFMLLEVPQLPG) traverse the membrane as a helical segment. At 171-196 (KFQQMMARPVEGMAAIQRAIDSVSHY) the chain is on the cytoplasmic side. Residues 197 to 217 (LVLKTAISIITGLVAWAMLAA) traverse the membrane as a helical segment. The Periplasmic segment spans residues 218–221 (LDVR). Residues 222–242 (FAFVWGLLAFALNYIPNIGSV) form a helical membrane-spanning segment. Over 243–257 (LAAIPPIAQVLVFNG) the chain is Cytoplasmic. Residues 258–278 (FYEALLVLAGYLLINLVFGNI) traverse the membrane as a helical segment. Over 279–292 (LEPRIMGRGLGLST) the chain is Periplasmic. Residues 293–313 (LVVFLSLIFWGWLLGPVGMLL) form a helical membrane-spanning segment. Topologically, residues 314 to 344 (SVPLTIIVKIALEQTAGGQSIAVLLSDLNKE) are cytoplasmic.

The protein belongs to the autoinducer-2 exporter (AI-2E) (TC 2.A.86) family.

The protein localises to the cell inner membrane. It carries out the reaction (2R,4S)-2-methyltetrahydrofuran-2,3,3,4-tetrol(in) = (2R,4S)-2-methyltetrahydrofuran-2,3,3,4-tetrol(out). Its function is as follows. Involved in the transport of the quorum-sensing signal autoinducer 2 (AI-2). Controls the transport of AI-2 either by enhancing its secretion or inhibiting its uptake and consequently represses biofilm formation and motility and affects the global gene expression in biofilms. The chain is AI-2 transport protein TqsA from Escherichia coli (strain K12).